Here is an 870-residue protein sequence, read N- to C-terminus: Translation initiation factor IF-2 (870 aa).

Positions 49–284 (SFQNSAPAEK…TKRKERPLPE (236 aa)) are disordered. Basic and acidic residues-rich tracts occupy residues 70-81 (RKNEKKQEDNAG) and 94-109 (QNNDRNHKNRNDRDHS). The segment covering 116–127 (KPKAAALLQQFK) has biased composition (low complexity). 2 stretches are compositionally biased toward basic and acidic residues: residues 144-159 (AKKEYHEQLKYPKKEQ) and 168-183 (NKESNNKKSEEVEKKV). Residues 254 to 279 (RKRRKNKNKKRKQEQKPKKQITKRKE) are compositionally biased toward basic residues. Residues 371–540 (KRPPVVTIMG…LLQADMMELK (170 aa)) form the tr-type G domain. Residues 380–387 (GHVDHGKT) are G1. Position 380–387 (380–387 (GHVDHGKT)) interacts with GTP. A G2 region spans residues 405–409 (GITQK). The G3 stretch occupies residues 426 to 429 (DTPG). GTP contacts are provided by residues 426–430 (DTPGH) and 480–483 (NKMD). A G4 region spans residues 480–483 (NKMD). A G5 region spans residues 516–518 (SAR).

It belongs to the TRAFAC class translation factor GTPase superfamily. Classic translation factor GTPase family. IF-2 subfamily.

It localises to the cytoplasm. One of the essential components for the initiation of protein synthesis. Protects formylmethionyl-tRNA from spontaneous hydrolysis and promotes its binding to the 30S ribosomal subunits. Also involved in the hydrolysis of GTP during the formation of the 70S ribosomal complex. The protein is Translation initiation factor IF-2 of Lactobacillus helveticus (strain DPC 4571).